Here is a 248-residue protein sequence, read N- to C-terminus: DNA repair protein RecO (248 aa).

The protein belongs to the RecO family.

In terms of biological role, involved in DNA repair and RecF pathway recombination. In Bacillus mycoides (strain KBAB4) (Bacillus weihenstephanensis), this protein is DNA repair protein RecO.